Reading from the N-terminus, the 292-residue chain is Syntenin-2 (292 aa).

PDZ domains follow at residues 108–187 (EIHL…IRDR) and 192–267 (TVTM…IPTV).

As to quaternary structure, monomer and homodimer. Interacts with SDCBP. Interacts with TM4SF1.

Its subcellular location is the cytoplasm. It localises to the nucleus. The protein localises to the nucleolus. It is found in the nucleoplasm. The protein resides in the cell membrane. Its subcellular location is the nucleus speckle. Functionally, binds phosphatidylinositol 4,5-bisphosphate (PIP2). May play a role in the organization of nuclear PIP2, cell division and cell survival. This chain is Syntenin-2 (Sdcbp2), found in Mus musculus (Mouse).